The following is a 269-amino-acid chain: 3-methyl-2-oxobutanoate hydroxymethyltransferase (269 aa).

Mg(2+) contacts are provided by Asp-42 and Asp-81. 3-methyl-2-oxobutanoate contacts are provided by residues 42–43 (DS), Asp-81, and Lys-111. Mg(2+) is bound at residue Glu-113. The active-site Proton acceptor is Glu-179. The segment at 250–269 (SGEFPRESHSHTEDELDDLY) is disordered. A compositionally biased stretch (basic and acidic residues) spans 252–262 (EFPRESHSHTE).

Belongs to the PanB family. Homodecamer; pentamer of dimers. Mg(2+) is required as a cofactor.

The protein localises to the cytoplasm. The catalysed reaction is 3-methyl-2-oxobutanoate + (6R)-5,10-methylene-5,6,7,8-tetrahydrofolate + H2O = 2-dehydropantoate + (6S)-5,6,7,8-tetrahydrofolate. It participates in cofactor biosynthesis; coenzyme A biosynthesis. In terms of biological role, catalyzes the reversible reaction in which hydroxymethyl group from 5,10-methylenetetrahydrofolate is transferred onto alpha-ketoisovalerate to form ketopantoate. The sequence is that of 3-methyl-2-oxobutanoate hydroxymethyltransferase from Haloarcula marismortui (strain ATCC 43049 / DSM 3752 / JCM 8966 / VKM B-1809) (Halobacterium marismortui).